Consider the following 425-residue polypeptide: Serine--tRNA ligase (425 aa).

An L-serine-binding site is contributed by 233–235 (TAE). ATP is bound by residues 264–266 (RRE) and Val-280. Residue Glu-287 coordinates L-serine. 351–354 (EVSS) lines the ATP pocket. Ser-387 is an L-serine binding site.

It belongs to the class-II aminoacyl-tRNA synthetase family. Type-1 seryl-tRNA synthetase subfamily. As to quaternary structure, homodimer. The tRNA molecule binds across the dimer.

Its subcellular location is the cytoplasm. The catalysed reaction is tRNA(Ser) + L-serine + ATP = L-seryl-tRNA(Ser) + AMP + diphosphate + H(+). It carries out the reaction tRNA(Sec) + L-serine + ATP = L-seryl-tRNA(Sec) + AMP + diphosphate + H(+). The protein operates within aminoacyl-tRNA biosynthesis; selenocysteinyl-tRNA(Sec) biosynthesis; L-seryl-tRNA(Sec) from L-serine and tRNA(Sec): step 1/1. Its function is as follows. Catalyzes the attachment of serine to tRNA(Ser). Is also able to aminoacylate tRNA(Sec) with serine, to form the misacylated tRNA L-seryl-tRNA(Sec), which will be further converted into selenocysteinyl-tRNA(Sec). In Gemmatimonas aurantiaca (strain DSM 14586 / JCM 11422 / NBRC 100505 / T-27), this protein is Serine--tRNA ligase.